Reading from the N-terminus, the 82-residue chain is UPF0180 protein BALH_1248 (82 aa).

Belongs to the UPF0180 family.

The polypeptide is UPF0180 protein BALH_1248 (Bacillus thuringiensis (strain Al Hakam)).